The following is a 150-amino-acid chain: Photosystem I reaction center subunit XI (150 aa).

Topologically, residues Met-1 to Asp-72 are stromal. Residues Val-73–Leu-93 traverse the membrane as a helical segment. Topologically, residues Ser-94 to Gln-118 are lumenal. Residues Phe-119–Ala-139 traverse the membrane as a helical segment. The Stromal portion of the chain corresponds to Asn-140–Ser-150.

The protein belongs to the PsaL family.

The protein resides in the plastid. Its subcellular location is the chloroplast thylakoid membrane. This Gracilaria tenuistipitata var. liui (Red alga) protein is Photosystem I reaction center subunit XI.